Here is a 1080-residue protein sequence, read N- to C-terminus: Kinesin-like protein KIN-14E (1080 aa).

A disordered region spans residues 1 to 35 (MDFSWTTGWEKAAADDDEAESAPAPAPPAPSPQEA). Positions 247–355 (QTRTSKLISK…KQEQTLLSLE (109 aa)) form a coiled coil. The Kinesin motor domain occupies 407–729 (NIRVFCRCRP…LNFASRVRRI (323 aa)). 490–497 (GQTGTGKT) is a binding site for ATP. Residues 736–893 (KQVDTAELQK…EHHRSVAESK (158 aa)) adopt a coiled-coil conformation. Over residues 960-970 (AMSEKEQHILR) the composition is skewed to basic and acidic residues. A disordered region spans residues 960-1080 (AMSEKEQHIL…AVNKTRGWVR (121 aa)). Positions 971–985 (SSDSMNKKVTNNSSI) are enriched in polar residues. The segment covering 1047-1059 (TATSKTAAATHKT) has biased composition (low complexity).

The protein belongs to the TRAFAC class myosin-kinesin ATPase superfamily. Kinesin family. KIN-14 subfamily.

The protein is Kinesin-like protein KIN-14E of Oryza sativa subsp. japonica (Rice).